A 160-amino-acid chain; its full sequence is 6,7-dimethyl-8-ribityllumazine synthase (160 aa).

5-amino-6-(D-ribitylamino)uracil-binding positions include Trp28, 59–61, and 81–83; these read ALE and CVI. 86–87 lines the (2S)-2-hydroxy-3-oxobutyl phosphate pocket; it reads ET. Catalysis depends on His89, which acts as the Proton donor. Asn114 lines the 5-amino-6-(D-ribitylamino)uracil pocket. Position 128 (Arg128) interacts with (2S)-2-hydroxy-3-oxobutyl phosphate.

This sequence belongs to the DMRL synthase family.

The enzyme catalyses (2S)-2-hydroxy-3-oxobutyl phosphate + 5-amino-6-(D-ribitylamino)uracil = 6,7-dimethyl-8-(1-D-ribityl)lumazine + phosphate + 2 H2O + H(+). It participates in cofactor biosynthesis; riboflavin biosynthesis; riboflavin from 2-hydroxy-3-oxobutyl phosphate and 5-amino-6-(D-ribitylamino)uracil: step 1/2. Its function is as follows. Catalyzes the formation of 6,7-dimethyl-8-ribityllumazine by condensation of 5-amino-6-(D-ribitylamino)uracil with 3,4-dihydroxy-2-butanone 4-phosphate. This is the penultimate step in the biosynthesis of riboflavin. This Corynebacterium urealyticum (strain ATCC 43042 / DSM 7109) protein is 6,7-dimethyl-8-ribityllumazine synthase.